The primary structure comprises 357 residues: GTPase Obg (357 aa).

One can recognise an Obg domain in the interval 1 to 159; sequence MKFVDEAFID…RNLKLELKVL (159 aa). The region spanning 160-334 is the OBG-type G domain; sequence ADVGLLGMPN…LVQSIFQHVH (175 aa). GTP contacts are provided by residues 166–173, 191–195, 213–216, 284–287, and 315–317; these read GMPNAGKS, FTTLH, DIPG, NKLD, and SAL. The Mg(2+) site is built by Ser173 and Thr193.

This sequence belongs to the TRAFAC class OBG-HflX-like GTPase superfamily. OBG GTPase family. Monomer. Mg(2+) serves as cofactor.

The protein resides in the cytoplasm. An essential GTPase which binds GTP, GDP and possibly (p)ppGpp with moderate affinity, with high nucleotide exchange rates and a fairly low GTP hydrolysis rate. Plays a role in control of the cell cycle, stress response, ribosome biogenesis and in those bacteria that undergo differentiation, in morphogenesis control. The polypeptide is GTPase Obg (Acidovorax ebreus (strain TPSY) (Diaphorobacter sp. (strain TPSY))).